A 372-amino-acid chain; its full sequence is MSERSYYDILGVSKSANDEEIKSAYRKLAIKYHPDKNKGNKESEEKFKEATEAYEILRDPKKRQAYDQFGKAGVSGGAGGFGQGAYTDFSDIFGDFGDIFGDFFGGGRSSGFGGGRRSGPQRGSDLRYNLEVSLEDAALGREYKIEIPRLESCVDCNGSGASKGSSPATCPDCGGSGQIRRTQGFFSVATTCPTCRGKGTIISNPCRSCGGQGLQEKRRTINIKIPPGVETGSRLKVSGEGEAGPNGGPHGDLYVVTHIKKHELFERQGNDLILVRKISLAQAILGAEIEVPTIDGKKAKMKIPEGTESGQVFRLKGHGMPYLGAYGKGDQHVIVKIEIPKKITRRQRELIEEFARESGENIPGSKGKIFTK.

Residues 5 to 70 (SYYDILGVSK…KKRQAYDQFG (66 aa)) form the J domain. Residues 140-218 (GREYKIEIPR…CGGQGLQEKR (79 aa)) form a CR-type zinc finger. Zn(2+) is bound by residues Cys-153, Cys-156, Cys-170, Cys-173, Cys-192, Cys-195, Cys-206, and Cys-209. CXXCXGXG motif repeat units follow at residues 153 to 160 (CVDCNGSG), 170 to 177 (CPDCGGSG), 192 to 199 (CPTCRGKG), and 206 to 213 (CRSCGGQG).

Belongs to the DnaJ family. As to quaternary structure, homodimer. The cofactor is Zn(2+).

Its subcellular location is the cytoplasm. Its function is as follows. Participates actively in the response to hyperosmotic and heat shock by preventing the aggregation of stress-denatured proteins and by disaggregating proteins, also in an autonomous, DnaK-independent fashion. Unfolded proteins bind initially to DnaJ; upon interaction with the DnaJ-bound protein, DnaK hydrolyzes its bound ATP, resulting in the formation of a stable complex. GrpE releases ADP from DnaK; ATP binding to DnaK triggers the release of the substrate protein, thus completing the reaction cycle. Several rounds of ATP-dependent interactions between DnaJ, DnaK and GrpE are required for fully efficient folding. Also involved, together with DnaK and GrpE, in the DNA replication of plasmids through activation of initiation proteins. This chain is Chaperone protein DnaJ, found in Leptospira interrogans serogroup Icterohaemorrhagiae serovar copenhageni (strain Fiocruz L1-130).